The following is a 531-amino-acid chain: MISRGLLSKGILSIIKRKNTGNLIPHVYYSEYHADIEERRKALGRLGISLYPSVTSDASTTTIPVIIEKWRNKITKSEIAMVRYTVCGRISSIRYSGSKLAFFDVLYGNKKLQVVFNKKNIGTEEEMKGKFIPRLKALQKGDCIQCSGNVGRSGSGELSIYATELPKLLSPCLHPIPVKLTNYEKRFEKRFVDMMSNTKSLELLEKRYRIIESIRKFFSERGFLEVETPILSHHFGGATARPFITSDIHKLPLTLRCAPELWLKQLVIGGMNRVFELGKNFRNEGIDATHNPEFTSCEAYCAYLNLEGMKKLTEELIRFICLTINGNLQISGQTVDLEKGFEVIEFIPALQKELNVELSPLDNSENCRKQLISIFKRCEIMLPKTCTVAHLLDKLFDSLVLKYNTSSPKFVINHPEVMSPLAKSDIKLYGAVEQRISKRFELYIGGYEICNAYEEENDPVAQYHKFQAQKYDRLQLGDDETPAPDSDFVHALEYGLPPTAGWGMGVDRLVMLMTGQSKISEILPFGSLRYV.

The transit peptide at 1-18 (MISRGLLSKGILSIIKRK) directs the protein to the mitochondrion.

It belongs to the class-II aminoacyl-tRNA synthetase family.

It is found in the mitochondrion. The enzyme catalyses tRNA(Lys) + L-lysine + ATP = L-lysyl-tRNA(Lys) + AMP + diphosphate. The polypeptide is Lysine--tRNA ligase, mitochondrial (msk1) (Schizosaccharomyces pombe (strain 972 / ATCC 24843) (Fission yeast)).